Consider the following 151-residue polypeptide: Large ribosomal subunit protein uL22c (151 aa).

The protein belongs to the universal ribosomal protein uL22 family. In terms of assembly, part of the 50S ribosomal subunit.

The protein resides in the plastid. The protein localises to the chloroplast. In terms of biological role, this protein binds specifically to 23S rRNA. The globular domain of the protein is located near the polypeptide exit tunnel on the outside of the subunit, while an extended beta-hairpin is found that lines the wall of the exit tunnel in the center of the 70S ribosome. This chain is Large ribosomal subunit protein uL22c (rpl22), found in Gossypium barbadense (Sea Island cotton).